Here is a 278-residue protein sequence, read N- to C-terminus: MSESKQFKRSVFFISDGTAITAETLGHSLLAQFPNVDFDIHIMPYITTEEAAMAVVVEINKCQTRDGCLPLVFDTLVDPHVREIINTAKAVNLDVFEGLISKLEQELGTPPTTLVGQTHAVTDSEYYKARIDAVHFALDNDDGARTRHYDKADLILIGVSRSGKTPTSIYLSLQFGIRVANYPLTEEDLDDNRLPAVLREHRSKLFGLMIDAERLVAIRSERKANSRYASFSQCQMELRAIEGIYISEGIKYLNVTEMSIEEISTRILQMTGLKRRIG.

Residue 158 to 165 coordinates ADP; it reads GVSRSGKT.

The protein belongs to the pyruvate, phosphate/water dikinase regulatory protein family. PSRP subfamily.

It carries out the reaction [pyruvate, water dikinase] + ADP = [pyruvate, water dikinase]-phosphate + AMP + H(+). It catalyses the reaction [pyruvate, water dikinase]-phosphate + phosphate + H(+) = [pyruvate, water dikinase] + diphosphate. Its function is as follows. Bifunctional serine/threonine kinase and phosphorylase involved in the regulation of the phosphoenolpyruvate synthase (PEPS) by catalyzing its phosphorylation/dephosphorylation. This chain is Putative phosphoenolpyruvate synthase regulatory protein, found in Acinetobacter baumannii (strain AYE).